Consider the following 583-residue polypeptide: Eukaryotic translation initiation factor 3 subunit D (583 aa).

Residues 116–150 (GRAQRGAGQRGGRAGFQRVGAGRGQGDRFYDNRGG) form a disordered region. The segment covering 140 to 149 (QGDRFYDNRG) has biased composition (basic and acidic residues). Residues 298-312 (SLDLVTVNENAIDAP) form an RNA gate region. Residues 561-583 (NTFEEDEEAAAEEEEQKAEEDEE) are disordered. Acidic residues predominate over residues 563–583 (FEEDEEAAAEEEEQKAEEDEE).

The protein belongs to the eIF-3 subunit D family. As to quaternary structure, component of the eukaryotic translation initiation factor 3 (eIF-3) complex.

The protein resides in the cytoplasm. Its function is as follows. mRNA cap-binding component of the eukaryotic translation initiation factor 3 (eIF-3) complex, which is involved in protein synthesis of a specialized repertoire of mRNAs and, together with other initiation factors, stimulates binding of mRNA and methionyl-tRNAi to the 40S ribosome. The eIF-3 complex specifically targets and initiates translation of a subset of mRNAs involved in cell proliferation. In the eIF-3 complex, eif3d specifically recognizes and binds the 7-methylguanosine cap of a subset of mRNAs. This is Eukaryotic translation initiation factor 3 subunit D from Aspergillus oryzae (strain ATCC 42149 / RIB 40) (Yellow koji mold).